The chain runs to 180 residues: Iron sulfur cluster assembly protein 1, mitochondrial (180 aa).

The protein belongs to the NifU family. In terms of assembly, component of the core Fe-S cluster (ISC) assembly machinery. It depends on [2Fe-2S] cluster as a cofactor.

The protein resides in the mitochondrion matrix. Its pathway is cofactor biosynthesis; iron-sulfur cluster biosynthesis. Its function is as follows. Scaffold protein for the de novo synthesis of iron-sulfur (Fe-S) clusters within mitochondria, which is required for maturation of both mitochondrial and cytoplasmic [2Fe-2S] and [4Fe-4S] proteins. First, a [2Fe-2S] cluster is transiently assembled on the scaffold protein ISU1. In a second step, the cluster is released from ISU1, transferred to a glutaredoxin, followed by the formation of mitochondrial [2Fe-2S] proteins, the synthesis of [4Fe-4S] clusters and their target-specific insertion into the recipient apoproteins. Cluster assembly on ISU1 depends on the function of the cysteine desulfurase complex NFS1-ISD11, which serves as the sulfur donor for cluster synthesis, the iron-binding protein frataxin as the putative iron donor, and the electron transfer chain comprised of ferredoxin reductase and ferredoxin, which receive their electrons from NADH. This chain is Iron sulfur cluster assembly protein 1, mitochondrial (ISU1), found in Kluyveromyces lactis (strain ATCC 8585 / CBS 2359 / DSM 70799 / NBRC 1267 / NRRL Y-1140 / WM37) (Yeast).